The sequence spans 471 residues: Coagulation factor IX (471 aa).

Positions 1–19 are cleaved as a signal peptide; that stretch reads MAKIPLILSFCLLEAFLGA. A propeptide spanning residues 20-39 is cleaved from the precursor; it reads ESTVFIENKEASTVLSRTRR. Positions 40–85 constitute a Gla domain; that stretch reads GNSNRLEELIPGNLERECIEEKCSFEEAREVFENTEKTMEFWKIYI. Ca(2+) is bound by residues N41, E46, E47, E54, E56, E59, E60, E65, E66, and E69. Residues E46, E47, E54, E56, E59, E60, E65, E66, E69, E72, E75, and E79 each carry the 4-carboxyglutamate modification. E54 is a Mg(2+) binding site. C57 and C62 are oxidised to a cystine. Position 59 (E59) interacts with Mg(2+). E65 is a Mg(2+) binding site. E69 serves as a coordination point for Mg(2+). Residues E75, E79, D86, G87, and Q89 each contribute to the Ca(2+) site. Residues E75 and E79 each coordinate Mg(2+). Residues 86 to 122 enclose the EGF-like 1; calcium-binding domain; the sequence is DGDQCNSNPCKNGAVCKDGVSSYECMCPPGYGGRNCE. 10 disulfides stabilise this stretch: C90–C101, C95–C110, C112–C121, C127–C138, C134–C148, C150–C163, C171–C345, C262–C278, C392–C406, and C417–C445. Residue S92 is glycosylated (O-linked (Glc...) serine). D103 serves as a coordination point for Ca(2+). Position 103 is a (3R)-3-hydroxyaspartate (D103). A Phosphoserine modification is found at S107. Residues 123–164 form the EGF-like 2 domain; the sequence is IDSTCATKNGGCEHFCRHDTPQKAVCSCASGYKLHEDGKSCK. The propeptide at 186–235 is activation peptide; that stretch reads TENTIERWNITAHDEGDAHDEALDITEPPPPPTTSAAPAKIVPITKNDTR. The Peptidase S1 domain occupies 236–469; the sequence is VVGGYDSVKG…YVKWIRETTR (234 aa). H277 (charge relay system) is an active-site residue. Ca(2+) contacts are provided by E291, N293, E296, and E301. The active-site Charge relay system is D325. Residue S421 is the Charge relay system of the active site.

This sequence belongs to the peptidase S1 family. As to quaternary structure, heterodimer of a light chain and a heavy chain; disulfide-linked. In terms of processing, activated by factor XIa, which excises the activation peptide. The propeptide can also be removed by snake venom protease. Activated by coagulation factor VIIa-tissue factor (F7-F3) complex in calcium-dependent manner. The iron and 2-oxoglutarate dependent 3-hydroxylation of aspartate and asparagine is (R) stereospecific within EGF domains.

The protein resides in the secreted. The enzyme catalyses Selective cleavage of Arg-|-Ile bond in factor X to form factor Xa.. Functionally, factor IX is a vitamin K-dependent plasma protein that participates in the intrinsic pathway of blood coagulation by converting factor X to its active form in the presence of Ca(2+) ions, phospholipids, and factor VIIIa. The protein is Coagulation factor IX (F9) of Gallus gallus (Chicken).